The chain runs to 196 residues: PRADC1-like protein (196 aa).

The signal sequence occupies residues 1–18; that stretch reads MLIAWLVLAATLSRSIRA. The region spanning 73–171 is the PA domain; the sequence is ITDPPGACQE…STLQRLKRVH (99 aa). The N-linked (GlcNAc...) asparagine glycan is linked to asparagine 179.

The protein resides in the secreted. In terms of biological role, may be involved in iversification of muscle cell fates. In Drosophila melanogaster (Fruit fly), this protein is PRADC1-like protein.